A 229-amino-acid chain; its full sequence is Histidine biosynthesis bifunctional protein HisIE (229 aa).

The interval 1 to 127 (MNTLLDGIDW…APDTSALYGV (127 aa)) is phosphoribosyl-AMP cyclohydrolase. The tract at residues 128–229 (VDRLYHELLA…IAEKNSRKDS (102 aa)) is phosphoribosyl-ATP pyrophosphohydrolase.

The protein in the N-terminal section; belongs to the PRA-CH family. In the C-terminal section; belongs to the PRA-PH family.

Its subcellular location is the cytoplasm. The catalysed reaction is 1-(5-phospho-beta-D-ribosyl)-ATP + H2O = 1-(5-phospho-beta-D-ribosyl)-5'-AMP + diphosphate + H(+). It catalyses the reaction 1-(5-phospho-beta-D-ribosyl)-5'-AMP + H2O = 1-(5-phospho-beta-D-ribosyl)-5-[(5-phospho-beta-D-ribosylamino)methylideneamino]imidazole-4-carboxamide. Its pathway is amino-acid biosynthesis; L-histidine biosynthesis; L-histidine from 5-phospho-alpha-D-ribose 1-diphosphate: step 2/9. The protein operates within amino-acid biosynthesis; L-histidine biosynthesis; L-histidine from 5-phospho-alpha-D-ribose 1-diphosphate: step 3/9. The sequence is that of Histidine biosynthesis bifunctional protein HisIE from Wolinella succinogenes (strain ATCC 29543 / DSM 1740 / CCUG 13145 / JCM 31913 / LMG 7466 / NCTC 11488 / FDC 602W) (Vibrio succinogenes).